A 1165-amino-acid chain; its full sequence is DNA-directed RNA polymerase subunit beta (1165 aa).

The protein belongs to the RNA polymerase beta chain family. In terms of assembly, the RNAP catalytic core consists of 2 alpha, 1 beta, 1 beta' and 1 omega subunit. When a sigma factor is associated with the core the holoenzyme is formed, which can initiate transcription.

It carries out the reaction RNA(n) + a ribonucleoside 5'-triphosphate = RNA(n+1) + diphosphate. Functionally, DNA-dependent RNA polymerase catalyzes the transcription of DNA into RNA using the four ribonucleoside triphosphates as substrates. The protein is DNA-directed RNA polymerase subunit beta of Corynebacterium glutamicum (strain ATCC 13032 / DSM 20300 / JCM 1318 / BCRC 11384 / CCUG 27702 / LMG 3730 / NBRC 12168 / NCIMB 10025 / NRRL B-2784 / 534).